The following is a 289-amino-acid chain: Ribosomal protein L11 methyltransferase (289 aa).

The S-adenosyl-L-methionine site is built by threonine 134, glycine 155, aspartate 177, and asparagine 225.

The protein belongs to the methyltransferase superfamily. PrmA family.

Its subcellular location is the cytoplasm. The enzyme catalyses L-lysyl-[protein] + 3 S-adenosyl-L-methionine = N(6),N(6),N(6)-trimethyl-L-lysyl-[protein] + 3 S-adenosyl-L-homocysteine + 3 H(+). In terms of biological role, methylates ribosomal protein L11. This is Ribosomal protein L11 methyltransferase from Parasynechococcus marenigrum (strain WH8102).